The sequence spans 317 residues: Acetyl-coenzyme A carboxylase carboxyl transferase subunit alpha (317 aa).

One can recognise a CoA carboxyltransferase C-terminal domain in the interval Lys-39–Ala-293.

The protein belongs to the AccA family. As to quaternary structure, acetyl-CoA carboxylase is a heterohexamer composed of biotin carboxyl carrier protein (AccB), biotin carboxylase (AccC) and two subunits each of ACCase subunit alpha (AccA) and ACCase subunit beta (AccD).

It localises to the cytoplasm. It catalyses the reaction N(6)-carboxybiotinyl-L-lysyl-[protein] + acetyl-CoA = N(6)-biotinyl-L-lysyl-[protein] + malonyl-CoA. It functions in the pathway lipid metabolism; malonyl-CoA biosynthesis; malonyl-CoA from acetyl-CoA: step 1/1. Component of the acetyl coenzyme A carboxylase (ACC) complex. First, biotin carboxylase catalyzes the carboxylation of biotin on its carrier protein (BCCP) and then the CO(2) group is transferred by the carboxyltransferase to acetyl-CoA to form malonyl-CoA. In Beijerinckia indica subsp. indica (strain ATCC 9039 / DSM 1715 / NCIMB 8712), this protein is Acetyl-coenzyme A carboxylase carboxyl transferase subunit alpha.